A 162-amino-acid chain; its full sequence is Peptide deformylase (162 aa).

C91 and H133 together coordinate Fe cation. E134 is an active-site residue. H137 lines the Fe cation pocket.

The protein belongs to the polypeptide deformylase family. Requires Fe(2+) as cofactor.

It carries out the reaction N-terminal N-formyl-L-methionyl-[peptide] + H2O = N-terminal L-methionyl-[peptide] + formate. In terms of biological role, removes the formyl group from the N-terminal Met of newly synthesized proteins. Requires at least a dipeptide for an efficient rate of reaction. N-terminal L-methionine is a prerequisite for activity but the enzyme has broad specificity at other positions. The sequence is that of Peptide deformylase from Finegoldia magna (strain ATCC 29328 / DSM 20472 / WAL 2508) (Peptostreptococcus magnus).